The following is a 559-amino-acid chain: Glycerol kinase (559 aa).

ADP is bound at residue T20. Residues T20, S21, and S22 each contribute to the ATP site. Residue T20 coordinates sn-glycerol 3-phosphate. R24 serves as a coordination point for ADP. Sn-glycerol 3-phosphate is bound by residues R94, E95, and Y148. Glycerol is bound by residues R94, E95, and Y148. Residue G252 participates in beta-D-fructose 1,6-bisphosphate binding. D265 is a binding site for sn-glycerol 3-phosphate. Glycerol is bound by residues D265 and Q266. Residues T287, G332, G433, and N437 each contribute to the ADP site. 3 residues coordinate ATP: T287, G332, and G433. E501 is a binding site for Zn(2+). The chain crosses the membrane as a helical span at residues 532–552 (IFCSLPLGFFIVSSMVMLIGA).

The protein belongs to the FGGY kinase family.

It localises to the mitochondrion outer membrane. It is found in the nucleus. The protein resides in the cytoplasm. The protein localises to the cytosol. It carries out the reaction glycerol + ATP = sn-glycerol 3-phosphate + ADP + H(+). It participates in polyol metabolism; glycerol degradation via glycerol kinase pathway; sn-glycerol 3-phosphate from glycerol: step 1/1. Functionally, kinase that plays a key role in glycerol metabolism, catalyzing its phosphorylation to produce sn-glycerol 3-phosphate. Sn-glycerol 3-phosphate is a crucial intermediate in various metabolic pathways, such as the synthesis of glycerolipids and triglycerides, glycogenesis, glycolysis and gluconeogenesis. In Rattus norvegicus (Rat), this protein is Glycerol kinase.